We begin with the raw amino-acid sequence, 227 residues long: Basic leucine zipper 24 (227 aa).

Residues 44-68 (EDKDQDRVTRGCSHTHSCNPPGPED) are disordered. The 67-residue stretch at 94–160 (DSSNKKRLCG…IRLRALLVEM (67 aa)) folds into the bZIP domain. The segment at 98-118 (KKRLCGNREAVRKYREKKKAR) is basic motif. The interval 122 to 129 (LEDEVMRL) is leucine-zipper.

In terms of assembly, homodimer. As to expression, expressed in young leaves and cauline leaves.

Its subcellular location is the nucleus. It is found in the cytoplasm. Functionally, transcription factor involved in the regulation of salt stress response. Functions as a negative transcriptional regulator of salt stress acclimation response by regulating cation homeostasis. Negatively regulates the expression of genes contributing to ion and osmotic homeostasis during salt stress, such as the Na(+) transporter HKT1, the Na(+)/H(+) antiporter SOS1, the aquaporin PIP2-1 and the glutamine synthetase GLN1-3. In addition, targets genes with functions in plant growth and development, such as argonaute 4 (AGO4) and cyclophilin 19 (CYP19). The protein is Basic leucine zipper 24 of Arabidopsis thaliana (Mouse-ear cress).